We begin with the raw amino-acid sequence, 170 residues long: Adenine phosphoribosyltransferase (170 aa).

The protein belongs to the purine/pyrimidine phosphoribosyltransferase family. In terms of assembly, homodimer.

It localises to the cytoplasm. It catalyses the reaction AMP + diphosphate = 5-phospho-alpha-D-ribose 1-diphosphate + adenine. The protein operates within purine metabolism; AMP biosynthesis via salvage pathway; AMP from adenine: step 1/1. In terms of biological role, catalyzes a salvage reaction resulting in the formation of AMP, that is energically less costly than de novo synthesis. The polypeptide is Adenine phosphoribosyltransferase (Thermotoga neapolitana (strain ATCC 49049 / DSM 4359 / NBRC 107923 / NS-E)).